Here is a 334-residue protein sequence, read N- to C-terminus: uncharacterized protein (334 aa).

Tyrosine 52 functions as the Proton donor in the catalytic mechanism. The tract at residues 314-334 is disordered; it reads LPPPASPNSEPQVTGGCSSMC. Residues 320–334 are compositionally biased toward polar residues; the sequence is PNSEPQVTGGCSSMC.

The protein belongs to the aldo/keto reductase family.

The protein localises to the cytoplasm. It localises to the nucleus. This is an uncharacterized protein from Schizosaccharomyces pombe (strain 972 / ATCC 24843) (Fission yeast).